The following is a 314-amino-acid chain: Ribosomal RNA small subunit methyltransferase H (314 aa).

S-adenosyl-L-methionine-binding positions include 31 to 33, Asp-49, Phe-76, Asp-118, and Gln-125; that span reads GGY.

It belongs to the methyltransferase superfamily. RsmH family.

The protein localises to the cytoplasm. It catalyses the reaction cytidine(1402) in 16S rRNA + S-adenosyl-L-methionine = N(4)-methylcytidine(1402) in 16S rRNA + S-adenosyl-L-homocysteine + H(+). Its function is as follows. Specifically methylates the N4 position of cytidine in position 1402 (C1402) of 16S rRNA. The chain is Ribosomal RNA small subunit methyltransferase H from Wolbachia pipientis wMel.